Consider the following 1523-residue polypeptide: Disco-interacting protein 2 homolog A (1523 aa).

The region spanning 9 to 105 is the DMAP1-binding domain; it reads EAAPLPAEVL…TSSASEDEGS (97 aa). The disordered stretch occupies residues 72–110; sequence KMPMPSKRRSALVHSSVETYTPPDTSSASEDEGSLRRPG. Residues 87–99 are compositionally biased toward polar residues; it reads SVETYTPPDTSSA. Phosphothreonine occurs at positions 92 and 115. Residues 132–158 form a disordered region; that stretch reads QGSSTSSSASSTSSHPGGRPAAAPSAS. Over residues 134-158 the composition is skewed to low complexity; sequence SSTSSSASSTSSHPGGRPAAAPSAS. Short sequence motifs (PXXP motif; required for interaction with CTTN) lie at residues 235 to 238 and 259 to 262; these read PKRP and PNQP.

The protein belongs to the DIP2 family. Interacts with FSTL1; DIP2A may act as a cell surface receptor for FSTL1. Interacts (via N-terminus) with CTTN (via SH3 domain); the interaction promotes acetylation of CTTN and is required for proper synaptic transmission. Interacts with SHANK3. As to expression, detected in heart, liver, spleen, lung, kidney and brain with highest levels in brain (at protein level). In adult cortex, preferentially expressed in excitatory neurons. Broadly expressed in neuronal, reproductive and vascular tissues as well as in heart, kidney, liver and lung with expression detected in neurons, mesenchyme, endothelium, smooth muscle cells and cardiomyocytes. Expressed in ectoderm-derived tissues in the developing embryo. Expressed in the developing nervous system.

The protein resides in the cell membrane. Its subcellular location is the mitochondrion. It is found in the cell projection. The protein localises to the dendritic spine. It carries out the reaction acetate + ATP + CoA = acetyl-CoA + AMP + diphosphate. In terms of biological role, catalyzes the de novo synthesis of acetyl-CoA in vitro. Promotes acetylation of CTTN, possibly by providing the acetyl donor, ensuring correct dendritic spine morphology and synaptic transmission. Binds to follistatin-related protein FSTL1 and may act as a cell surface receptor for FSTL1, contributing to AKT activation and subsequent FSTL1-induced survival and function of endothelial cells and cardiac myocytes. The chain is Disco-interacting protein 2 homolog A (Dip2a) from Mus musculus (Mouse).